Here is an 842-residue protein sequence, read N- to C-terminus: MTSIIKLKVFSGAKDEGPLCYLLQVDNDYILLDCGWDERFELKYFEELRPYIPKISAVLISHPDPLHLGGLPYLVAKCGLTAPVYCTVPVYKMGQMFIYDLVYSHLDVEEFQHYSLDDVDMAFEKVEQVKYNQTVVLKGDSGVNFTAMPAGHMIGGSMWRICRITGEDIIYCVDFNHRKDRHLSGCSFDNFNRPHLLITGAHHISLPQMKRKDRDEQLVTKILRTVRQKGDCMIVIDTAGRVLELAYLLDQLWANQDAGLSTYNLVMMSHVASSVVQFAKSQLEWMDEKLFRYDSSSARYNPFTLKNVNLVHSHLELIKIRSPKVVLCSSQDMETGFSRELFLDWCADQRNGVILTARPASFTLAARLVELAERANDGVLRNEDKHLSLLVRKRVPLEGEELLEYKRRKAERDAEETRIRMERARRQAQANESDDSDDDDIAAPIVPRLSEKDHRSFDAIENDSHCFDIMAKWDNQQKASFFKSTKKSFPMYPYIEEKVKWDDYGEVIKPEDYTVISKIDMRKGKNKDEPVVVHKREDEEEVYNPNDHDEEMPTKCVEFRNRIEISCRVEFIEYEGISDGESTKKMLAGLMPRQIIIVHGSRDDTRDLYAYFTDNGFKKDQLNTPVANELIDASVESFIYQVSLSDALLAEIQFKEVSEGNSLAWIDARIQEKESIDNMLVAGASQLTIEDSLQEDAVEVVEEDVIPMETFQDDQNKQEASEENVAEGEKSNGQSKENDENASSIPIETQPKIRGTLILTPLPKKQIPVHQAIFVNDPKLSEFKNLLVDKGYKAEFFSGTLLINGGKCSILVERLDSKWRVLSQKTFTNFGSCSTTSLLFCK.

The segment covering 414–425 (AEETRIRMERAR) has biased composition (basic and acidic residues). 2 disordered regions span residues 414 to 442 (AEET…DDIA) and 708 to 747 (METF…SIPI). The segment covering 432–441 (ESDDSDDDDI) has biased composition (acidic residues). The span at 731 to 747 (SNGQSKENDENASSIPI) shows a compositional bias: polar residues.

It belongs to the metallo-beta-lactamase superfamily. RNA-metabolizing metallo-beta-lactamase-like family. CPSF2/YSH1 subfamily. As to quaternary structure, CPSF is a heterotetramer composed of four distinct subunits 160, 100, 70 and 30 kDa.

The protein resides in the nucleus. CPSF plays a key role in pre-mRNA 3'-end formation, recognizing the AAUAAA signal sequence and interacting with poly(A)polymerase and other factors to bring about cleavage and poly(A) addition. The chain is Probable cleavage and polyadenylation specificity factor subunit 2 from Caenorhabditis briggsae.